A 361-amino-acid polypeptide reads, in one-letter code: Alanine racemase (361 aa).

The active-site Proton acceptor; specific for D-alanine is the Lys-35. At Lys-35 the chain carries N6-(pyridoxal phosphate)lysine. Arg-130 is a binding site for substrate. Tyr-257 acts as the Proton acceptor; specific for L-alanine in catalysis. Residue Met-305 coordinates substrate.

The protein belongs to the alanine racemase family. It depends on pyridoxal 5'-phosphate as a cofactor.

The enzyme catalyses L-alanine = D-alanine. It participates in amino-acid biosynthesis; D-alanine biosynthesis; D-alanine from L-alanine: step 1/1. Catalyzes the interconversion of L-alanine and D-alanine. May also act on other amino acids. The chain is Alanine racemase (alr) from Nitrosomonas eutropha (strain DSM 101675 / C91 / Nm57).